The following is a 345-amino-acid chain: MNPIINLILLSSMIAGTILTMSSHHWVSAWLGLELNTLAIIPIISKTHHPRATEASTKYFLIQAASSALFLLSGITNAYSHGTWDMAHLTNTPSKIMLSVALATKLGLAPIHFWLPEVLQGTPMITALIITTWQKIAPMALLITTWNLIPPTITLIMGLLSTIIGGLGGLNQTQLRKMMAYSSIAHLGWMITITTITPSLALFNLTLYILLTTSTMLIMHLTLSKTLQNTMLIYSYSPTTASLFLLSLLSLGGLPPLSGFSPKWLILQELTTHHLTPLALLMAITALLSLMFYLRTSYISTMTIPPSTTPLKNTWRLKSNSNTSLLSSLILLSLFLLPITPLMIQ.

10 helical membrane-spanning segments follow: residues M1–M21, H25–S45, Y59–Y79, I96–P116, P123–I143, L148–G168, I191–L211, T240–F260, H274–L294, and S324–I344.

The protein belongs to the complex I subunit 2 family.

Its subcellular location is the mitochondrion inner membrane. The catalysed reaction is a ubiquinone + NADH + 5 H(+)(in) = a ubiquinol + NAD(+) + 4 H(+)(out). Functionally, core subunit of the mitochondrial membrane respiratory chain NADH dehydrogenase (Complex I) that is believed to belong to the minimal assembly required for catalysis. Complex I functions in the transfer of electrons from NADH to the respiratory chain. The immediate electron acceptor for the enzyme is believed to be ubiquinone. The protein is NADH-ubiquinone oxidoreductase chain 2 (MT-ND2) of Varanus timorensis (Timor monitor).